The primary structure comprises 273 residues: Large ribosomal subunit protein uL2cy (273 aa).

Disordered regions lie at residues Met-1–Val-22 and Asn-224–Lys-273.

Belongs to the universal ribosomal protein uL2 family. Part of the 50S ribosomal subunit.

The protein resides in the plastid. Its subcellular location is the chloroplast. This Chloranthus spicatus (Chulantree) protein is Large ribosomal subunit protein uL2cy (rpl2-B).